Reading from the N-terminus, the 262-residue chain is Transcription factor Adf-1 (262 aa).

Positions 24-104 (NLIEAVKLNP…QMQFLVDSIR (81 aa)) form a DNA-binding region, MADF. The BESS domain maps to 217-256 (SAEDQSFGMVVTDMLNTLGVRQKAEAKVHIIKYLTDMQLL).

O-glycosylated; contains N-acetylglucosamine side chains.

It is found in the nucleus. Its function is as follows. May play an important role not only in the regulation of Adh expression but also in the transcription of other genes. The polypeptide is Transcription factor Adf-1 (Adf1) (Drosophila melanogaster (Fruit fly)).